Here is a 201-residue protein sequence, read N- to C-terminus: Small ribosomal subunit protein uS4 (201 aa).

In terms of domain architecture, S4 RNA-binding spans 91–151; sequence SRLDNVVYRA…EKSQKMIWFE (61 aa).

It belongs to the universal ribosomal protein uS4 family. In terms of assembly, part of the 30S ribosomal subunit. Contacts protein S5. The interaction surface between S4 and S5 is involved in control of translational fidelity.

One of the primary rRNA binding proteins, it binds directly to 16S rRNA where it nucleates assembly of the body of the 30S subunit. Functionally, with S5 and S12 plays an important role in translational accuracy. The chain is Small ribosomal subunit protein uS4 from Corynebacterium diphtheriae (strain ATCC 700971 / NCTC 13129 / Biotype gravis).